A 279-amino-acid polypeptide reads, in one-letter code: Four and a half LIM domains protein 2 (279 aa).

The C4-type zinc-finger motif lies at 7–31; that stretch reads CHHCNESLYGKKYILKEENPHCVAC. LIM zinc-binding domains lie at 40–92, 101–153, and 162–212; these read CEEC…CTDC, CQEC…CVPC, and CVQC…CLTC. Residue K78 forms a Glycyl lysine isopeptide (Lys-Gly) (interchain with G-Cter in SUMO2) linkage. Glycyl lysine isopeptide (Lys-Gly) (interchain with G-Cter in SUMO2) cross-links involve residues K167 and K220. Residues 221–275 form the LIM zinc-binding 4 domain; the sequence is CAGCTNPISGLGGTKYISFEERQWHNDCFNCKKCSLSLVGRGFLTERDDILCPDC. S238 carries the post-translational modification Phosphoserine.

Interacts with ZNF638 and TTN/titin. Interacts with E4F1. Interacts with GRB7. Interacts with SIRT1 and FOXO1. Interacts with CEFIP. Interacts with calcineurin. Interacts with FOXK1. Highly expressed in heart but also detectable in brain and skeletal muscle.

Its subcellular location is the cytoplasm. It localises to the nucleus. The protein localises to the myofibril. The protein resides in the sarcomere. It is found in the z line. Functionally, may function as a molecular transmitter linking various signaling pathways to transcriptional regulation. Negatively regulates the transcriptional repressor E4F1 and may function in cell growth. Inhibits the transcriptional activity of FOXO1 and its apoptotic function by enhancing the interaction of FOXO1 with SIRT1 and FOXO1 deacetylation. Negatively regulates the calcineurin/NFAT signaling pathway in cardiomyocytes. This is Four and a half LIM domains protein 2 (Fhl2) from Mus musculus (Mouse).